We begin with the raw amino-acid sequence, 96 residues long: Salivary protein FS50 (96 aa).

An N-terminal signal peptide occupies residues 1-19 (MKWILVLALVCLAVEYSYS). Disulfide bonds link Cys-26–Cys-71, Cys-50–Cys-78, Cys-63–Cys-91, and Cys-67–Cys-93.

It localises to the secreted. In terms of biological role, salivary protein that inhibits host voltage-gated sodium channel Nav1.5/SCN5A. In Xenopsylla cheopis (Oriental rat flea), this protein is Salivary protein FS50.